A 193-amino-acid chain; its full sequence is Potassium-transporting ATPase KdpC subunit (193 aa).

The helical transmembrane segment at 7–27 (PLVVLFVVLNAVTGLAYPAVM) threads the bilayer.

Belongs to the KdpC family. The system is composed of three essential subunits: KdpA, KdpB and KdpC.

It localises to the cell inner membrane. In terms of biological role, part of the high-affinity ATP-driven potassium transport (or Kdp) system, which catalyzes the hydrolysis of ATP coupled with the electrogenic transport of potassium into the cytoplasm. This subunit acts as a catalytic chaperone that increases the ATP-binding affinity of the ATP-hydrolyzing subunit KdpB by the formation of a transient KdpB/KdpC/ATP ternary complex. This chain is Potassium-transporting ATPase KdpC subunit, found in Burkholderia cenocepacia (strain HI2424).